The chain runs to 432 residues: Adenylosuccinate synthetase (432 aa).

GTP is bound by residues 13–19 and 41–43; these read GDEGKGK and GHT. Residue D14 is the Proton acceptor of the active site. Mg(2+) is bound by residues D14 and G41. Residues 14-17, 39-42, T130, R144, Q225, T240, and R304 contribute to the IMP site; these read DEGK and NAGH. H42 acts as the Proton donor in catalysis. Residue 300 to 306 participates in substrate binding; that stretch reads AVTGRPR. GTP contacts are provided by residues R306, 332 to 334, and 415 to 417; these read KLD and STG.

It belongs to the adenylosuccinate synthetase family. As to quaternary structure, homodimer. It depends on Mg(2+) as a cofactor.

It is found in the cytoplasm. It carries out the reaction IMP + L-aspartate + GTP = N(6)-(1,2-dicarboxyethyl)-AMP + GDP + phosphate + 2 H(+). It functions in the pathway purine metabolism; AMP biosynthesis via de novo pathway; AMP from IMP: step 1/2. Plays an important role in the de novo pathway of purine nucleotide biosynthesis. Catalyzes the first committed step in the biosynthesis of AMP from IMP. The chain is Adenylosuccinate synthetase from Actinobacillus pleuropneumoniae serotype 3 (strain JL03).